Here is a 1077-residue protein sequence, read N- to C-terminus: Error-prone DNA polymerase (1077 aa).

It belongs to the DNA polymerase type-C family. DnaE2 subfamily.

Its subcellular location is the cytoplasm. The catalysed reaction is DNA(n) + a 2'-deoxyribonucleoside 5'-triphosphate = DNA(n+1) + diphosphate. Its function is as follows. DNA polymerase involved in damage-induced mutagenesis and translesion synthesis (TLS). It is not the major replicative DNA polymerase. The sequence is that of Error-prone DNA polymerase from Brucella abortus biovar 1 (strain 9-941).